The sequence spans 195 residues: Imidazoleglycerol-phosphate dehydratase (195 aa).

It belongs to the imidazoleglycerol-phosphate dehydratase family.

It localises to the cytoplasm. It catalyses the reaction D-erythro-1-(imidazol-4-yl)glycerol 3-phosphate = 3-(imidazol-4-yl)-2-oxopropyl phosphate + H2O. It participates in amino-acid biosynthesis; L-histidine biosynthesis; L-histidine from 5-phospho-alpha-D-ribose 1-diphosphate: step 6/9. The protein is Imidazoleglycerol-phosphate dehydratase of Burkholderia vietnamiensis (strain G4 / LMG 22486) (Burkholderia cepacia (strain R1808)).